Reading from the N-terminus, the 127-residue chain is Large ribosomal subunit protein bL12 (127 aa).

Belongs to the bacterial ribosomal protein bL12 family. In terms of assembly, homodimer. Part of the ribosomal stalk of the 50S ribosomal subunit. Forms a multimeric L10(L12)X complex, where L10 forms an elongated spine to which 2 to 4 L12 dimers bind in a sequential fashion. Binds GTP-bound translation factors.

Forms part of the ribosomal stalk which helps the ribosome interact with GTP-bound translation factors. Is thus essential for accurate translation. This Nitratiruptor sp. (strain SB155-2) protein is Large ribosomal subunit protein bL12.